A 724-amino-acid polypeptide reads, in one-letter code: Phenylalanine ammonia-lyase (724 aa).

Tyr-91 serves as the catalytic Proton donor/acceptor. The 5-imidazolinone (Ala-Gly) cross-link spans 205–207 (ASG). 2,3-didehydroalanine (Ser) is present on Ser-206. The (E)-cinnamate site is built by Asn-265, Gln-357, Arg-363, Asn-393, Lys-467, Glu-495, and Asn-498.

This sequence belongs to the PAL/histidase family. Homotetramer. Contains an active site 4-methylidene-imidazol-5-one (MIO), which is formed autocatalytically by cyclization and dehydration of residues Ala-Ser-Gly.

It is found in the cytoplasm. It catalyses the reaction L-phenylalanine = (E)-cinnamate + NH4(+). Its pathway is phenylpropanoid metabolism; trans-cinnamate biosynthesis; trans-cinnamate from L-phenylalanine: step 1/1. Its function is as follows. Catalyzes the non-oxidative deamination of L-phenylalanine to form trans-cinnamic acid and a free ammonium ion. Facilitates the commitment step in phenylpropanoid pathways that produce secondary metabolites such as lignins, coumarins and flavonoids. The sequence is that of Phenylalanine ammonia-lyase (PAL1) from Mycosarcoma maydis (Corn smut fungus).